Reading from the N-terminus, the 389-residue chain is Chalcone synthase E (389 aa).

Cys164 is an active-site residue.

The protein belongs to the thiolase-like superfamily. Chalcone/stilbene synthases family.

It carries out the reaction (E)-4-coumaroyl-CoA + 3 malonyl-CoA + 3 H(+) = 2',4,4',6'-tetrahydroxychalcone + 3 CO2 + 4 CoA. Its pathway is secondary metabolite biosynthesis; flavonoid biosynthesis. In terms of biological role, the primary product of this enzyme is 4,2',4',6'-tetrahydroxychalcone (also termed naringenin-chalcone or chalcone) which can under specific conditions spontaneously isomerize into naringenin. In Ipomoea nil (Japanese morning glory), this protein is Chalcone synthase E (CHSE).